Consider the following 441-residue polypeptide: 3-phosphoshikimate 1-carboxyvinyltransferase (441 aa).

3 residues coordinate 3-phosphoshikimate: lysine 26, serine 27, and arginine 31. Phosphoenolpyruvate is bound at residue lysine 26. Positions 99 and 127 each coordinate phosphoenolpyruvate. The 3-phosphoshikimate site is built by serine 173, serine 174, glutamine 175, serine 203, aspartate 320, and lysine 347. Phosphoenolpyruvate is bound at residue glutamine 175. Aspartate 320 serves as the catalytic Proton acceptor. Positions 351, 393, and 423 each coordinate phosphoenolpyruvate.

It belongs to the EPSP synthase family. Monomer.

It localises to the cytoplasm. It catalyses the reaction 3-phosphoshikimate + phosphoenolpyruvate = 5-O-(1-carboxyvinyl)-3-phosphoshikimate + phosphate. It functions in the pathway metabolic intermediate biosynthesis; chorismate biosynthesis; chorismate from D-erythrose 4-phosphate and phosphoenolpyruvate: step 6/7. Functionally, catalyzes the transfer of the enolpyruvyl moiety of phosphoenolpyruvate (PEP) to the 5-hydroxyl of shikimate-3-phosphate (S3P) to produce enolpyruvyl shikimate-3-phosphate and inorganic phosphate. The protein is 3-phosphoshikimate 1-carboxyvinyltransferase of Janthinobacterium sp. (strain Marseille) (Minibacterium massiliensis).